Consider the following 149-residue polypeptide: Transcriptional repressor NrdR (149 aa).

A zinc finger lies at 3–34 (CPFCSAVDTKVIDSRLVGDGSQVRRRRQCLVC). One can recognise an ATP-cone domain in the interval 49 to 139 (PRVVKSNGVR…VYRSFEDVRE (91 aa)).

It belongs to the NrdR family. The cofactor is Zn(2+).

In terms of biological role, negatively regulates transcription of bacterial ribonucleotide reductase nrd genes and operons by binding to NrdR-boxes. The polypeptide is Transcriptional repressor NrdR (Edwardsiella ictaluri (strain 93-146)).